Reading from the N-terminus, the 170-residue chain is Ureidoglycolate lyase (170 aa).

Belongs to the ureidoglycolate lyase family. Homodimer. Ni(2+) serves as cofactor.

The enzyme catalyses (S)-ureidoglycolate = urea + glyoxylate. It participates in nitrogen metabolism; (S)-allantoin degradation. Functionally, catalyzes the catabolism of the allantoin degradation intermediate (S)-ureidoglycolate, generating urea and glyoxylate. Involved in the utilization of allantoin as nitrogen source. This is Ureidoglycolate lyase from Pseudomonas syringae pv. syringae (strain B728a).